The primary structure comprises 119 residues: Large ribosomal subunit protein bL20 (119 aa).

It belongs to the bacterial ribosomal protein bL20 family.

Its function is as follows. Binds directly to 23S ribosomal RNA and is necessary for the in vitro assembly process of the 50S ribosomal subunit. It is not involved in the protein synthesizing functions of that subunit. This chain is Large ribosomal subunit protein bL20, found in Neisseria gonorrhoeae (strain ATCC 700825 / FA 1090).